The primary structure comprises 218 residues: UPF0173 metal-dependent hydrolase Mpal_1063 (218 aa).

It belongs to the UPF0173 family.

This is UPF0173 metal-dependent hydrolase Mpal_1063 from Methanosphaerula palustris (strain ATCC BAA-1556 / DSM 19958 / E1-9c).